Here is a 360-residue protein sequence, read N- to C-terminus: Peptide chain release factor 1 (360 aa).

At Q235 the chain carries N5-methylglutamine. Positions 284-312 (AKRQQAEASTRRNLLGSGDRSDRNRTYNF) are disordered.

This sequence belongs to the prokaryotic/mitochondrial release factor family. Methylated by PrmC. Methylation increases the termination efficiency of RF1.

The protein resides in the cytoplasm. Peptide chain release factor 1 directs the termination of translation in response to the peptide chain termination codons UAG and UAA. The sequence is that of Peptide chain release factor 1 from Escherichia coli O81 (strain ED1a).